A 978-amino-acid chain; its full sequence is Peroxisomal ATPase PEX6 (978 aa).

Residue Arg119 is modified to Omega-N-methylarginine. ATP contacts are provided by residues 470–477 (GPPGSGKT) and 742–749 (GPPGTGKT).

This sequence belongs to the AAA ATPase family. In terms of assembly, interacts with PEX1; forming the PEX1-PEX6 AAA ATPase complex, which is composed of a heterohexamer formed by a trimer of PEX1-PEX6 dimers. Interacts with PEX26; interaction is direct and promotes recruitment to peroxisomal membranes. Interacts with ZFAND6.

It localises to the cytoplasm. It is found in the cytosol. The protein resides in the peroxisome membrane. Its subcellular location is the cell projection. The protein localises to the cilium. It localises to the photoreceptor outer segment. The enzyme catalyses ATP + H2O = ADP + phosphate + H(+). Functionally, component of the PEX1-PEX6 AAA ATPase complex, a protein dislocase complex that mediates the ATP-dependent extraction of the PEX5 receptor from peroxisomal membranes, an essential step for PEX5 recycling. Specifically recognizes PEX5 monoubiquitinated at 'Cys-11', and pulls it out of the peroxisome lumen through the PEX2-PEX10-PEX12 retrotranslocation channel. Extraction by the PEX1-PEX6 AAA ATPase complex is accompanied by unfolding of the TPR repeats and release of bound cargo from PEX5. This chain is Peroxisomal ATPase PEX6, found in Rattus norvegicus (Rat).